The chain runs to 224 residues: 7-cyano-7-deazaguanine synthase (224 aa).

ATP is bound at residue 8–18; that stretch reads LSGGMDSAAVI. Zn(2+)-binding residues include Cys186, Cys196, Cys199, and Cys202.

Belongs to the QueC family. Zn(2+) is required as a cofactor.

It catalyses the reaction 7-carboxy-7-deazaguanine + NH4(+) + ATP = 7-cyano-7-deazaguanine + ADP + phosphate + H2O + H(+). The protein operates within purine metabolism; 7-cyano-7-deazaguanine biosynthesis. Its function is as follows. Catalyzes the ATP-dependent conversion of 7-carboxy-7-deazaguanine (CDG) to 7-cyano-7-deazaguanine (preQ(0)). The sequence is that of 7-cyano-7-deazaguanine synthase from Xanthomonas axonopodis pv. citri (strain 306).